We begin with the raw amino-acid sequence, 437 residues long: Transcription factor 12 (437 aa).

3 disordered regions span residues 1 to 68, 80 to 123, and 244 to 335; these read EFHD…QTGD, PDHT…YENS, and ASNT…ERRM. Polar residues predominate over residues 13–37; the sequence is VSPTDISTSLPPMSSFHRGSTSSSP. A Phosphothreonine modification is found at Thr-44. Phosphoserine is present on Ser-64. Over residues 83 to 94 the composition is skewed to low complexity; that stretch reads TSSSFPSNPSTP. 2 stretches are compositionally biased toward polar residues: residues 95-107 and 114-123; these read VGSP…TSQW and APSSPSYENS. Composition is skewed to basic and acidic residues over residues 273–285 and 291–306; these read IKTE…ENLH and DDMK…DIKV. Lys-274 is covalently cross-linked (Glycyl lysine isopeptide (Lys-Gly) (interchain with G-Cter in SUMO2)). Phosphoserine is present on Ser-295. Residue Lys-305 forms a Glycyl lysine isopeptide (Lys-Gly) (interchain with G-Cter in SUMO2) linkage. The residue at position 312 (Thr-312) is a Phosphothreonine. A phosphoserine mark is found at Ser-313 and Ser-314. The span at 323-335 shows a compositional bias: basic and acidic residues; the sequence is PEQKIEREKERRM. Residues 332-385 form the bHLH domain; it reads ERRMANNARERLRVRDINEAFKELGRMCQLHLKSEKPQTKLLILHQAVAVILSL. Residues Lys-364 and Lys-408 each participate in a glycyl lysine isopeptide (Lys-Gly) (interchain with G-Cter in SUMO2) cross-link. The segment at 387–410 is class A specific domain; that stretch reads QQVRERNLNPKAACLKRREEEKVS. Residues 405-437 are disordered; that stretch reads EEEKVSAASAEPPTTLPGTHPGLSETTNPMGHL. Residues 416-427 are compositionally biased toward low complexity; the sequence is PPTTLPGTHPGL. The span at 428-437 shows a compositional bias: polar residues; it reads SETTNPMGHL.

As to quaternary structure, efficient DNA binding requires dimerization with another bHLH protein. Forms homo- or heterooligomers with myogenin, E12 and ITF2 proteins. Interacts with NEUROD2. Interacts with PTF1A. Interacts with RUNX1T1. Interacts with BHLHA9.

It localises to the nucleus. Functionally, transcriptional regulator. Involved in the initiation of neuronal differentiation. Activates transcription by binding to the E box (5'-CANNTG-3'). Participates in the control of inducible RP4 gene expression in salivary cells. Binds to the RIPE3 element of the insulin II promoter. May be involved in the functional network that regulates the development of the GnRH axis. In Mesocricetus auratus (Golden hamster), this protein is Transcription factor 12 (TCF12).